The sequence spans 1066 residues: Pumilio homolog 2 (1066 aa).

Residues Met-1–Gln-260 are interaction with SNAPIN. Phosphoserine is present on residues Ser-67, Ser-70, Ser-82, and Ser-102. 3 disordered regions span residues Lys-106–Pro-203, Thr-368–Leu-408, and Thr-490–Leu-551. The span at Arg-119–Gly-133 shows a compositional bias: basic and acidic residues. A phosphoserine mark is found at Ser-136, Ser-177, and Ser-181. The residue at position 183 (Thr-183) is a Phosphothreonine. Low complexity predominate over residues Thr-368 to Gln-383. The span at Ile-394–Glu-406 shows a compositional bias: polar residues. Thr-395 carries the phosphothreonine modification. Positions Gln-503–Pro-514 are enriched in low complexity. The span at Ser-515 to Gly-525 shows a compositional bias: polar residues. Residues Ser-526–Ser-540 are compositionally biased toward low complexity. Residues Ser-587 and Ser-592 each carry the phosphoserine modification. Positions Ser-620–Leu-650 are disordered. Over residues Thr-630 to Leu-650 the composition is skewed to low complexity. Omega-N-methylarginine is present on Arg-674. Phosphoserine is present on residues Ser-684 and Ser-700. One can recognise a PUM-HD domain in the interval Gly-706–Tyr-1048. 8 Pumilio repeats span residues Asp-726–Asn-761, Glu-762–Thr-797, Arg-798–Lys-835, Glu-836–Asp-871, Ala-872–Glu-907, Glu-908–Ser-943, Glu-944–Asp-979, and Glu-980–His-1022. Residues Ser-741–Gln-745 are adenine-nucleotide binding in RNA target. The tract at residues Asn-777–Gln-781 is uracil-nucleotide binding in RNA target. The tract at residues Cys-813 to Gln-817 is adenine-nucleotide binding in RNA target. A non-specific-nucleotide binding in RNA target region spans residues Asn-851 to Gln-855. Residues Cys-887–Gln-891 form an adenine-nucleotide binding in RNA target region. The uracil-nucleotide binding in RNA target stretch occupies residues Asn-923–Gln-927. The guanine-nucleotide binding in RNA target stretch occupies residues Ser-959–Glu-963. Residues Asn-1002 to Gln-1006 form a uracil-nucleotide binding in RNA target region.

As to quaternary structure, homodimer; homodimerizes in vitro. Interacts with DAZ1, DAZL and NANOS1 via its pumilio repeats. Interacts with NANOS3. Interacts with SNAPIN. Recruits the CCR4-POP2-NOT deadenylase leading to translational inhibition and mRNA degradation. Interacts with DDX20. In case of viral infection, interacts with DHX58. Widely expressed. Expressed in embryonic stem cells, heart, kidney, lung, skin, intestine, spleen and thymus. Expressed at intermediate level in brain and liver. Weakly or not expressed in muscles and stomach. Expressed at various stages of myeloid and lymphoid cell development. In the testis expressed in the spermatogoni, spermatocytes, spermatids and Sertoli cells.

The protein localises to the cytoplasm. It is found in the cytoplasmic granule. The protein resides in the perinuclear region. In terms of biological role, sequence-specific RNA-binding protein that acts as a post-transcriptional repressor by binding the 3'-UTR of mRNA targets. Binds to an RNA consensus sequence, the Pumilio Response Element (PRE), 5'-UGUANAUA-3', that is related to the Nanos Response Element (NRE). Mediates post-transcriptional repression of transcripts via different mechanisms: acts via direct recruitment of the CCR4-POP2-NOT deadenylase leading to translational inhibition and mRNA degradation. Also mediates deadenylation-independent repression by promoting accessibility of miRNAs. Acts as a post-transcriptional repressor of E2F3 mRNAs by binding to its 3'-UTR and facilitating miRNA regulation. Plays a role in cytoplasmic sensing of viral infection. Represses a program of genes necessary to maintain genomic stability such as key mitotic, DNA repair and DNA replication factors. Its ability to repress those target mRNAs is regulated by the lncRNA NORAD (non-coding RNA activated by DNA damage) which, due to its high abundance and multitude of PUMILIO binding sites, is able to sequester a significant fraction of PUM1 and PUM2 in the cytoplasm. May regulate DCUN1D3 mRNA levels. May support proliferation and self-renewal of stem cells. Binds specifically to miRNA MIR199A precursor, with PUM1, regulates miRNA MIR199A expression at a postranscriptional level. The polypeptide is Pumilio homolog 2 (Pum2) (Mus musculus (Mouse)).